A 778-amino-acid chain; its full sequence is Ubiquitin thioesterase trabid (778 aa).

2 RanBP2-type zinc fingers span residues 5 to 36 and 89 to 118; these read KDDAQKWKCETCTYENYPSSLKCTMCQASKPL and DSEKWPCKVCTYLNWPRSLRCVQCCTKRGG. Residues 187–197 show a composition bias toward polar residues; it reads ASHNQSQSQHR. A disordered region spans residues 187–226; that stretch reads ASHNQSQSQHRQPVLQQQMQLQLQPQQQRESSSSAAVPPQ. The span at 198 to 226 shows a compositional bias: low complexity; sequence QPVLQQQMQLQLQPQQQRESSSSAAVPPQ. The RanBP2-type 3 zinc-finger motif lies at 232–261; that stretch reads YVSKWACNSCTYENWPRSIKCSMCGKTRER. A disordered region spans residues 265–290; sequence GSQNDLHASSSLNSQEENQQQLQQPN. Over residues 273–288 the composition is skewed to low complexity; that stretch reads SSSLNSQEENQQQLQQ. Residues 507–665 enclose the OTU domain; that stretch reads MFVLWNRSAG…RGHFSALVPM (159 aa). Cysteine 518 acts as the Nucleophile in catalysis. Histidine 658 serves as the catalytic Proton acceptor. A phosphoserine mark is found at serine 770, serine 771, and serine 775.

It belongs to the peptidase C64 family. Interacts with Apc.

The catalysed reaction is Thiol-dependent hydrolysis of ester, thioester, amide, peptide and isopeptide bonds formed by the C-terminal Gly of ubiquitin (a 76-residue protein attached to proteins as an intracellular targeting signal).. Functionally, positive regulator of the Wnt signaling pathway. Specifically cleaves 'Lys-63'-linked ubiquitin chains. May act by deubiquitinating APC protein, a negative regulator of Wnt-mediated transcription. Required for an efficient wg response, but not for other signaling responses, in the eye. In Drosophila melanogaster (Fruit fly), this protein is Ubiquitin thioesterase trabid (trbd).